A 747-amino-acid polypeptide reads, in one-letter code: H(+)/Cl(-) exchange transporter 4 (747 aa).

The interval 1 to 50 is required for localization in the endoplasmic reticulum; sequence MDFLDEPFPDVGTYEDFHTIDWLREKSRDTDRHRKITSKSKESIWEFIKS. At 1-54 the chain is on the cytoplasmic side; the sequence is MDFLDEPFPDVGTYEDFHTIDWLREKSRDTDRHRKITSKSKESIWEFIKSLLDA. The next 2 membrane-spanning stretches (helical) occupy residues 55-92 and 138-161; these read WSGW…VCLS and LNYL…VRVF. Residues 167 to 171 carry the Selectivity filter part_1 motif; sequence GSGIP. Chloride is bound at residue S168. The helical intramembrane region spans 170-177; sequence IPEIKTIL. Helical transmembrane passes span 187 to 205 and 211 to 230; these read GKWT…VSSG and EGPL…SLFS. The Selectivity filter part_2 motif lies at 209-213; that stretch reads GKEGP. 2 consecutive intramembrane regions (helical) follow at residues 242-254 and 258-266; these read VLSA…VSVA and PIGGVLFSL. 5 helical membrane passes run 278-296, 320-345, 352-372, 429-449, and 454-473; these read LWRS…RSIN, FPFI…AWCR, LGKY…IIAY, MWQL…TFGM, and GLFI…VGIG. Residues 454–458 carry the Selectivity filter part_3 motif; that stretch reads GLFIP. F456 is a binding site for chloride. 2 intramembrane regions (helical) span residues 501–515 and 519–530; these read GLYA…LGGV and TVSLVVIMFELT. Residues 531–534 constitute an intramembrane region (note=Loop between two helices); sequence GGLE. The chain crosses the membrane as a helical span at residues 535 to 553; it reads YIVPLMAAAVTSKWVADAF. The Cytoplasmic segment spans residues 554 to 747; the sequence is GKEGIYEAHI…NQDPESIIFN (194 aa). Y559 lines the chloride pocket. Residues 587 to 653 form the CBS 1 domain; the sequence is MRPRRGEPPL…AIKNARQRQE (67 aa). ATP contacts are provided by residues S597 and 618 to 620; that span reads YNG. Residues 654–683 are required for localization in the endoplasmic reticulum; sequence GIVSNSIMYFTEEPPELPANSPHPLKLRRI. In terms of domain architecture, CBS 2 spans 684–742; it reads LNLSPFTVTDHTPMETVVDIFRKLGLRQCLVTRSGRLLGIITKKDVLRHMAQMANQDPE. 725-728 is an ATP binding site; sequence TKKD.

It belongs to the chloride channel (TC 2.A.49) family. ClC-4/CLCN4 subfamily. In terms of tissue distribution, strongly expressed in liver and brain, but also in heart, muscle, kidney and spleen.

It localises to the early endosome membrane. The protein resides in the late endosome membrane. The protein localises to the endoplasmic reticulum membrane. Its subcellular location is the lysosome membrane. It is found in the recycling endosome membrane. In terms of biological role, strongly outwardly rectifying, electrogenic H(+)/Cl(-)exchanger which mediates the exchange of chloride ions against protons. The CLC channel family contains both chloride channels and proton-coupled anion transporters that exchange chloride or another anion for protons. The presence of conserved gating glutamate residues is typical for family members that function as antiporters. The sequence is that of H(+)/Cl(-) exchange transporter 4 (Clcn4) from Rattus norvegicus (Rat).